The chain runs to 100 residues: Large ribosomal subunit protein uL23 (100 aa).

This sequence belongs to the universal ribosomal protein uL23 family. In terms of assembly, part of the 50S ribosomal subunit. Contacts protein L29, and trigger factor when it is bound to the ribosome.

Its function is as follows. One of the early assembly proteins it binds 23S rRNA. One of the proteins that surrounds the polypeptide exit tunnel on the outside of the ribosome. Forms the main docking site for trigger factor binding to the ribosome. The polypeptide is Large ribosomal subunit protein uL23 (Shewanella sp. (strain MR-4)).